We begin with the raw amino-acid sequence, 886 residues long: Microsomal triacylglycerol transfer protein (886 aa).

The signal sequence occupies residues 1–27 (MENKNKKCLRTLLLLALFLGLLEDGKT). In terms of domain architecture, Vitellogenin spans 30–653 (IAPNSQQIFK…SQASSFKLGI (624 aa)). 4 N-linked (GlcNAc...) asparagine glycosylation sites follow: N358, N484, N502, and N616.

The protein localises to the endoplasmic reticulum. It is found in the golgi apparatus. It carries out the reaction a 1,2-diacyl-sn-glycero-3-phosphocholine(in) = a 1,2-diacyl-sn-glycero-3-phosphocholine(out). The enzyme catalyses a 1,2-diacyl-sn-glycero-3-phosphoethanolamine(in) = a 1,2-diacyl-sn-glycero-3-phosphoethanolamine(out). In terms of biological role, catalyzes the transport of phospholipids such as phosphatidylethanolamine (1,2-diacyl-sn-glycero-3-phosphoethanolamine) and phosphatidylcholine (1,2-diacyl-sn-glycero-3-phosphocholine) between membranes. Required for the assembly and secretion of plasma lipoproteins that contain apolipoprotein B. The protein is Microsomal triacylglycerol transfer protein of Drosophila melanogaster (Fruit fly).